A 320-amino-acid polypeptide reads, in one-letter code: Glutaconate CoA-transferase subunit A (320 aa).

This sequence belongs to the 3-oxoacid CoA-transferase subunit A family. As to quaternary structure, heterooctamer of four A and four B subunits.

It is found in the cytoplasm. It catalyses the reaction trans-glutaconate + acetyl-CoA = (2E)-glutaconyl-CoA + acetate. It participates in amino-acid degradation; L-glutamate degradation via hydroxyglutarate pathway; crotonoyl-CoA from L-glutamate: step 3/5. Catalyzes the transfer of the CoA moiety from acetyl-CoA to (R)-2-hydroxyglutarate and related compounds like glutaconate. In Acidaminococcus fermentans (strain ATCC 25085 / DSM 20731 / CCUG 9996 / CIP 106432 / VR4), this protein is Glutaconate CoA-transferase subunit A (gctA).